We begin with the raw amino-acid sequence, 237 residues long: MYSVLLNPSNTEIYSFLTERIYRELVVIFATCKVNYKGRAESVASESPRLIILKPDGTVIIHESVKREPLNWQPPGTKIEIMNDYPLKIVAQRKRPKEVIEIDLKEVFYITSAEVKDGDFVIKGREIDIVNTIIQNPSMIEEGFVPLTREYNTPYGKIDLVGLDKKGNFVIIEVKRSKAQLSAVSQLYRYYLHIRETKEDKVRGILVAPDLTTHARELLQKLGLEFIRYDIQKYSSY.

This sequence belongs to the NucS endonuclease family.

It localises to the cytoplasm. Its function is as follows. Cleaves both 3' and 5' ssDNA extremities of branched DNA structures. This is Endonuclease NucS from Saccharolobus islandicus (strain L.S.2.15 / Lassen #1) (Sulfolobus islandicus).